Reading from the N-terminus, the 858-residue chain is MGEINQVAVEKYLEENPQFAKEYFDRKLRVEVLGEIFKNSQVPVQSSMSFSELTQVEESALCLELLWTVQEEGGTPEQGVHRALQRLAHLLQADRCSMFLCRSRNGIPEVASRLLDVTPTSKFEDNLVGPDKEVVFPLDIGIVGWAAHTKKTHNVPDVKKNSHFSDFMDKQTGYVTKNLLATPIVVGKEVLAVIMAVNKVNASEFSKQDEEVFSKYLNFVSIILRLHHTSYMYNIESRRSQILMWSANKVFEELTDVERQFHKALYTVRSYLNCERYSIGLLDMTKEKEFYDEWPIKLGEVEPYKGPKTPDGREVNFYKIIDYILHGKEEIKVIPTPPADHWTLISGLPTYVAENGFICNMMNAPADEYFTFQKGPVDETGWVIKNVLSLPIVNKKEDIVGVATFYNRKDGKPFDEHDEYITETLTQFLGWSLLNTDTYDKMNKLENRKDIAQEMLMNQTKATPEEIKSILKFQEKLNVDVIDDCEEKQLVAILKEDLPDPRSAELYEFRFSDFPLTEHGLIKCGIRLFFEINVVEKFKVPVEVLTRWMYTVRKGYRAVTYHNWRHGFNVGQTMFTLLMTGRLKKYYTDLEAFAMLAAAFCHDIDHRGTNNLYQMKSTSPLARLHGSSILERHHLEYSKTLLQDESLNIFQNLNKRQFETVIHLFEVAIIATDLALYFKKRTMFQKIVDACEQMQTEEEAIKYVTVDPTKKEIIMAMMMTACDLSAITKPWEVQSQVALMVANEFWEQGDLERTVLQQQPIPMMDRNKRDELPKLQVGFIDFVCTFVYKEFSRFHKEITPMLSGLQNNRVEWKSLADEYDAKMKVIEEEAKKQEGGAEKAAEDSGGGDDKKSKTCLML.

GAF domains are found at residues 75–224 (TPEQ…SIIL) and 256–433 (DVER…GWSL). 3',5'-cyclic GMP contacts are provided by residues Ser97, Asp116, 169-172 (DKQT), and Thr176. Residues 486 to 819 (EEKQLVAILK…VEWKSLADEY (334 aa)) enclose the PDEase domain. Residue His562 is the Proton donor of the active site. A divalent metal cation-binding residues include His566, His602, Asp603, and Asp723. Residues 830-852 (AKKQEGGAEKAAEDSGGGDDKKS) are compositionally biased toward basic and acidic residues. Residues 830–858 (AKKQEGGAEKAAEDSGGGDDKKSKTCLML) are disordered. Position 855 is a cysteine methyl ester (Cys855). A lipid anchor (S-geranylgeranyl cysteine) is attached at Cys855. Positions 856–858 (LML) are cleaved as a propeptide — removed in mature form.

It belongs to the cyclic nucleotide phosphodiesterase family. As to quaternary structure, composed of two alpha' subunits that are associated with 3 smaller proteins of 11, 13, and 15 kDa. It depends on a divalent metal cation as a cofactor.

The protein localises to the cell membrane. It catalyses the reaction 3',5'-cyclic GMP + H2O = GMP + H(+). Functionally, as cone-specific cGMP phosphodiesterase, it plays an essential role in light detection and cone phototransduction by rapidly decreasing intracellular levels of cGMP. This chain is Cone cGMP-specific 3',5'-cyclic phosphodiesterase subunit alpha' (PDE6C), found in Homo sapiens (Human).